An 847-amino-acid chain; its full sequence is A-kinase anchor protein 4 (847 aa).

Positions 1 to 187 (MIAYCGTTKM…MAASKNTNNN (187 aa)) are excised as a propeptide. A phosphoserine mark is found at S95, S129, S189, and S203. Residues 182 to 204 (KNTNNNQSPSNPATKSPSNQRSV) show a composition bias toward polar residues. Positions 182–209 (KNTNNNQSPSNPATKSPSNQRSVATPDG) are disordered. Position 206 is a phosphothreonine (T206). S212, S225, and S270 each carry phosphoserine. The tract at residues 218 to 231 (YYVNRLSSLVIQMA) is interaction with Prkar1a and Prkar2a. Y300 carries the post-translational modification Phosphotyrosine. Phosphoserine occurs at positions 301, 304, 340, 430, 441, 443, 462, 491, 496, and 503. Positions 334–343 (YANQVASDMM) are PKA-RI subunit binding domain. The residue at position 505 (T505) is a Phosphothreonine. The disordered stretch occupies residues 511 to 536 (KQGTQGRVPNKVCPSKDEKREKISPS). Residues 524–533 (PSKDEKREKI) are compositionally biased toward basic and acidic residues. Phosphoserine is present on residues S536 and S581. Residues 583–613 (QYEKSGGGQSSKSLSMKHFESRGAPGPSTCA) form a disordered region. A phosphoserine mark is found at S626, S631, S648, S650, S674, S677, S700, and S729. A disordered region spans residues 655-677 (CCDSRSKQAAPVAKRPEDQSQDS).

This sequence belongs to the AKAP110 family. In terms of assembly, interacts with PRKAR1A and PRKAR2A. Interacts with ENO4. Interacts with QRICH2. Phosphorylated by STK33 during sperm flagella assembly. Expressed in flagella of epididymal sperm.

It is found in the cell projection. The protein resides in the cilium. Its subcellular location is the flagellum. Its function is as follows. Major structural component of sperm fibrous sheath. May play a role in sperm motility. The protein is A-kinase anchor protein 4 of Rattus norvegicus (Rat).